The primary structure comprises 460 residues: A-type ATP synthase subunit B 1 (460 aa).

This sequence belongs to the ATPase alpha/beta chains family. As to quaternary structure, has multiple subunits with at least A(3), B(3), C, D, E, F, H, I and proteolipid K(x).

Its subcellular location is the cell membrane. In terms of biological role, component of the A-type ATP synthase that produces ATP from ADP in the presence of a proton gradient across the membrane. The B chain is a regulatory subunit. The sequence is that of A-type ATP synthase subunit B 1 from Methanospirillum hungatei JF-1 (strain ATCC 27890 / DSM 864 / NBRC 100397 / JF-1).